The primary structure comprises 77 residues: U8-lycotoxin-Ls1h (77 aa).

The N-terminal stretch at 1–20 (MKLIIFTGLVLFAIVSLIEV) is a signal peptide. The propeptide occupies 21-26 (QADNER).

Belongs to the neurotoxin 19 (CSTX) family. 08 (U8-Lctx) subfamily. Post-translationally, contains 4 disulfide bonds. Expressed by the venom gland.

It is found in the secreted. The protein is U8-lycotoxin-Ls1h of Lycosa singoriensis (Wolf spider).